Here is a 1135-residue protein sequence, read N- to C-terminus: Protocadherin-18 (1135 aa).

Residues Met-1–Gly-27 form the signal peptide. Cadherin domains follow at residues Lys-28 to Phe-137, Ser-138 to Phe-246, Glu-247 to Ile-354, Pro-361 to Phe-465, Gln-466 to Val-576, and Arg-582 to Met-688. At Lys-28–Ser-699 the chain is on the extracellular side. An N-linked (GlcNAc...) asparagine glycan is attached at Asn-103. Asn-269, Asn-420, Asn-559, Asn-583, and Asn-641 each carry an N-linked (GlcNAc...) asparagine glycan. A helical transmembrane segment spans residues Met-700–Phe-720. At Ala-721–Ser-1135 the chain is on the cytoplasmic side. Disordered regions lie at residues Leu-769–Gln-800, Ser-869–Arg-889, Asp-942–Ser-1003, and Tyr-1023–Thr-1046. Polar residues predominate over residues Gly-791 to Gln-800. Positions Ser-869 to Ser-878 are enriched in basic and acidic residues. The segment at Ile-893 to Ser-1135 is interaction with DAB1. Basic and acidic residues predominate over residues Glu-1028 to Lys-1039.

Interacts with DAB1. As to expression, expressed in all tissues, with highest expression in lung and ovary.

The protein resides in the cell membrane. Its function is as follows. Potential calcium-dependent cell-adhesion protein. The protein is Protocadherin-18 (PCDH18) of Homo sapiens (Human).